The sequence spans 458 residues: Argininosuccinate lyase (458 aa).

Belongs to the lyase 1 family. Argininosuccinate lyase subfamily.

It localises to the cytoplasm. The catalysed reaction is 2-(N(omega)-L-arginino)succinate = fumarate + L-arginine. It functions in the pathway amino-acid biosynthesis; L-arginine biosynthesis; L-arginine from L-ornithine and carbamoyl phosphate: step 3/3. In Salmonella paratyphi B (strain ATCC BAA-1250 / SPB7), this protein is Argininosuccinate lyase.